Reading from the N-terminus, the 57-residue chain is Bowman-Birk type proteinase inhibitor B4 (57 aa).

Disulfide bonds link C6–C55, C12–C17, C26–C33, and C30–C47.

Belongs to the Bowman-Birk serine protease inhibitor family. As to expression, expressed in bulb (at protein level).

Its function is as follows. Serine protease inhibitor. Inhibits trypsin (Ki = 110 nM) and very weakly inhibits chymotrypsin (Ki =1200 nM). Does not inhibit bacterial subtilisin. The protein is Bowman-Birk type proteinase inhibitor B4 of Hyacinthus orientalis (Common hyacinth).